The chain runs to 265 residues: uncharacterized protein (265 aa).

E47 contributes to the thiamine diphosphate binding site. The segment at 204 to 247 (QHQMWLVQHILRVARHCGFTVTTMEMTLIETQVRLKITVKSDRT) is thiamine pyrophosphate binding.

It belongs to the TPP enzyme family. Requires Mg(2+) as cofactor. Thiamine diphosphate serves as cofactor.

Functionally, truncated acetolactase synthase; no longer catalytically active. This is an uncharacterized protein from Haemophilus influenzae (strain ATCC 51907 / DSM 11121 / KW20 / Rd).